Reading from the N-terminus, the 614-residue chain is Dolichyl-diphosphooligosaccharide--protein glycosyltransferase subunit 1A (614 aa).

The signal sequence occupies residues 1–25 (MKQSSVVDLLLLLLAIALLATPAFS). The Lumenal segment spans residues 26 to 432 (DLVLSKVERR…QVYYKFSNIN (407 aa)). N-linked (GlcNAc...) asparagine glycosylation is found at Asn-94 and Asn-299. Lys-311 participates in a covalent cross-link: Glycyl lysine isopeptide (Lys-Gly) (interchain with G-Cter in ubiquitin). N-linked (GlcNAc...) asparagine glycosylation is present at Asn-352. Residues 433-453 (LLSEPLMLISGFFILFITCII) traverse the membrane as a helical segment. Residues 454–614 (YTRADISISK…EDLLEFIDEI (161 aa)) lie on the Cytoplasmic side of the membrane.

It belongs to the OST1 family. Component of the oligosaccharyltransferase (OST) complex.

It localises to the endoplasmic reticulum membrane. Its pathway is protein modification; protein glycosylation. Its function is as follows. Subunit of the oligosaccharyl transferase (OST) complex that catalyzes the initial transfer of a defined glycan (Glc(3)Man(9)GlcNAc(2) in eukaryotes) from the lipid carrier dolichol-pyrophosphate to an asparagine residue within an Asn-X-Ser/Thr consensus motif in nascent polypeptide chains, the first step in protein N-glycosylation. N-glycosylation occurs cotranslationally and the complex associates with the Sec61 complex at the channel-forming translocon complex that mediates protein translocation across the endoplasmic reticulum (ER). All subunits are required for a maximal enzyme activity. The protein is Dolichyl-diphosphooligosaccharide--protein glycosyltransferase subunit 1A (OST1A) of Arabidopsis thaliana (Mouse-ear cress).